Here is a 1296-residue protein sequence, read N- to C-terminus: ABC transporter B family member 21 (1296 aa).

Residues 1-59 (MDSVIESEEGLKVDSPNRADAETSNSKIHEEDEKELKTESDLKEEKKKTEKNKQEEDEK) are disordered. The segment covering 9-59 (EGLKVDSPNRADAETSNSKIHEEDEKELKTESDLKEEKKKTEKNKQEEDEK) has biased composition (basic and acidic residues). The helical transmembrane segment at 77–97 (IILMILGTIGAVGNGLGFPIM) threads the bilayer. The region spanning 80–368 (MILGTIGAVG…ASPCLSAFAA (289 aa)) is the ABC transmembrane type-1 1 domain. N-linked (GlcNAc...) asparagine glycosylation is present at asparagine 113. A run of 5 helical transmembrane segments spans residues 128–148 (FVYL…GWMI), 205–225 (IQLV…GWLL), 227–247 (LVMV…AIVI), 307–327 (GLGL…AVWY), and 336–356 (GYTG…SMSL). The 237-residue stretch at 403–639 (IELNNVNFSY…PEGAYSQLIR (237 aa)) folds into the ABC transporter 1 domain. N-linked (GlcNAc...) asparagine glycosylation occurs at asparagine 409. 438–445 (GQSGSGKS) is a binding site for ATP. Asparagine 505, asparagine 519, and asparagine 590 each carry an N-linked (GlcNAc...) asparagine glycan. The span at 640-662 (LQEDTKQTEDSTDEQKLSMESMK) shows a compositional bias: basic and acidic residues. The interval 640 to 672 (LQEDTKQTEDSTDEQKLSMESMKRSSLRKSSLS) is disordered. Phosphoserine is present on residues serine 657 and serine 660. Positions 730 to 1017 (LILGSIAAVL…SSSLSPDSSK (288 aa)) constitute an ABC transmembrane type-1 2 domain. Transmembrane regions (helical) follow at residues 731–751 (ILGS…GILI) and 774–794 (IIFM…TIFF). Asparagine 826 carries N-linked (GlcNAc...) asparagine glycosylation. 3 helical membrane-spanning segments follow: residues 865-885 (VIAF…LPLI), 952-972 (GIVS…SYAA), and 986-1006 (TTFD…VAIS). An ABC transporter 2 domain is found at 1052 to 1289 (IELRHISFKY…KDGVYASLVQ (238 aa)). 1087–1094 (GESGSGKS) provides a ligand contact to ATP. N-linked (GlcNAc...) asparagine glycosylation is found at asparagine 1141 and asparagine 1240.

Belongs to the ABC transporter superfamily. ABCB family. Multidrug resistance exporter (TC 3.A.1.201) subfamily.

It localises to the membrane. The sequence is that of ABC transporter B family member 21 (ABCB21) from Arabidopsis thaliana (Mouse-ear cress).